Reading from the N-terminus, the 183-residue chain is Large ribosomal subunit protein uL6 (183 aa).

This sequence belongs to the universal ribosomal protein uL6 family. As to quaternary structure, part of the 50S ribosomal subunit.

Functionally, this protein binds to the 23S rRNA, and is important in its secondary structure. It is located near the subunit interface in the base of the L7/L12 stalk, and near the tRNA binding site of the peptidyltransferase center. In Chlamydia trachomatis serovar A (strain ATCC VR-571B / DSM 19440 / HAR-13), this protein is Large ribosomal subunit protein uL6.